The chain runs to 180 residues: Probable galaptin lec-8 (180 aa).

The 128-residue stretch at Ser-11–Ser-138 folds into the Galectin domain.

The protein is Probable galaptin lec-8 (lec-8) of Caenorhabditis elegans.